The following is an 84-amino-acid chain: CDC42 small effector protein 2 (84 aa).

Residues C10 and C11 are each lipidated (S-palmitoyl cysteine). Residues I29–G42 enclose the CRIB domain. A phosphoserine mark is found at S43 and S52.

The protein belongs to the CDC42SE/SPEC family. Interacts with CDC42 (in GTP-bound form). Interacts weakly with RAC1 and not at all with RHOA.

The protein localises to the cytoplasm. The protein resides in the cytoskeleton. It is found in the cell membrane. It localises to the cell projection. Its subcellular location is the phagocytic cup. Its function is as follows. Probably involved in the organization of the actin cytoskeleton by acting downstream of CDC42, inducing actin filament assembly. Alters CDC42-induced cell shape changes. In activated T-cells, may play a role in CDC42-mediated F-actin accumulation at the immunological synapse. May play a role in early contractile events in phagocytosis in macrophages. This chain is CDC42 small effector protein 2 (CDC42SE2), found in Pongo abelii (Sumatran orangutan).